The sequence spans 603 residues: NADH-ubiquinone oxidoreductase chain 5 (603 aa).

Transmembrane regions (helical) follow at residues 4 to 24 (LPTL…LSPL), 38 to 58 (MAVS…MHSG), 87 to 107 (LIFM…SLWY), 117 to 137 (FFKY…ANNL), 140 to 160 (LFIG…WWYG), 171 to 191 (AMIY…WFLL), 211 to 233 (LPLT…HPWL), 241 to 261 (TPVS…FLLI), 273 to 293 (ILTL…ICAL), 301 to 320 (IIAF…IGIN), 331 to 351 (THAF…HSLG), 366 to 386 (LPFT…MPFL), 409 to 429 (LLIT…IIFF), 457 to 477 (LMLG…PTTV), 488 to 508 (FMAL…SSFT), and 583 to 603 (MIKL…LLII).

It belongs to the complex I subunit 5 family.

It localises to the mitochondrion inner membrane. The enzyme catalyses a ubiquinone + NADH + 5 H(+)(in) = a ubiquinol + NAD(+) + 4 H(+)(out). In terms of biological role, core subunit of the mitochondrial membrane respiratory chain NADH dehydrogenase (Complex I) that is believed to belong to the minimal assembly required for catalysis. Complex I functions in the transfer of electrons from NADH to the respiratory chain. The immediate electron acceptor for the enzyme is believed to be ubiquinone. The protein is NADH-ubiquinone oxidoreductase chain 5 (MT-ND5) of Dugong dugon (Dugong).